Consider the following 317-residue polypeptide: Melanocyte-stimulating hormone receptor (317 aa).

The Extracellular segment spans residues 1 to 37 (MPMQGAQRRLLGSLNSTPTATPNLGLAANHTGAPCLE). N-linked (GlcNAc...) asparagine glycosylation occurs at N29. The chain crosses the membrane as a helical span at residues 38 to 63 (VSIPDGLFLSLGLVSLVENVLVVAAI). Topologically, residues 64–72 (AKNRNLHSP) are cytoplasmic. A helical membrane pass occupies residues 73–93 (MYCFICCLALSDLLVSGSNML). At 94 to 118 (EMAVILLLEAGALATRASVVQQLQN) the chain is on the extracellular side. Residues 119-140 (TIDVLTCSSMLCSLCFLGAIAV) traverse the membrane as a helical segment. The Cytoplasmic portion of the chain corresponds to 141 to 163 (DRYVSIFYALRYHSIVTLPRARR). Residues 164–183 (AIAAIWVASVLSSTLFIAYC) form a helical membrane-spanning segment. The Extracellular portion of the chain corresponds to 184-191 (DHAAVLLC). A helical transmembrane segment spans residues 192–211 (LVVFFLAMLVLMAVLYVHML). Residues 212-240 (ARACQHAQGITRLHKRQLPAHQGFGLRGA) lie on the Cytoplasmic side of the membrane. A helical transmembrane segment spans residues 241-266 (ATLTILLGIFFLCWGPFFLHLMLVVL). The Extracellular segment spans residues 267–279 (CPQHLTCSCIFKN). The helical transmembrane segment at 280–300 (FKVFLTLIICNTIIDPLIYAF) threads the bilayer. Residues 301–317 (RSQELCRTLREVLLCSW) lie on the Cytoplasmic side of the membrane. C315 carries S-palmitoyl cysteine lipidation.

It belongs to the G-protein coupled receptor 1 family. In terms of assembly, interacts with MGRN1, but does not undergo MGRN1-mediated ubiquitination; this interaction competes with GNAS-binding and thus inhibits agonist-induced cAMP production. Interacts with OPN3; the interaction results in a decrease in MC1R-mediated cAMP signaling and ultimately a decrease in melanin production in melanocytes.

It is found in the cell membrane. In terms of biological role, receptor for MSH (alpha, beta and gamma) and ACTH. The activity of this receptor is mediated by G proteins which activate adenylate cyclase. Mediates melanogenesis, the production of eumelanin (black/brown) and phaeomelanin (red/yellow), via regulation of cAMP signaling in melanocytes. This Alouatta pigra (Guatemalan howler monkey) protein is Melanocyte-stimulating hormone receptor (MC1R).